The chain runs to 111 residues: uncharacterized protein (111 aa).

A helical transmembrane segment spans residues 48–70 (LFLVPFPASFTRWLTFLFHLVIY).

The protein localises to the membrane. This is an uncharacterized protein from Saccharomyces cerevisiae (strain ATCC 204508 / S288c) (Baker's yeast).